Here is a 309-residue protein sequence, read N- to C-terminus: Probable (S)-ureidoglycine aminohydrolase (309 aa).

A signal peptide spans methionine 1–alanine 22. Residues glutamate 245, histidine 247, histidine 251, and glutamine 285 each contribute to the Mn(2+) site. Glutamate 245 serves as a coordination point for substrate. Substrate contacts are provided by glutamine 285, tyrosine 297, and lysine 301.

The protein belongs to the UGHY family. Homooctamer. Requires Mn(2+) as cofactor.

It is found in the endoplasmic reticulum. It catalyses the reaction (S)-2-ureidoglycine + H2O = (S)-ureidoglycolate + NH4(+). Functionally, involved in the catabolism of purine nucleotides. The sequential activity of AAH, UGLYAH and UAH allows a complete purine breakdown without the intermediate generation of urea. The polypeptide is Probable (S)-ureidoglycine aminohydrolase (UGLYAH) (Oryza sativa subsp. japonica (Rice)).